Consider the following 179-residue polypeptide: Arginine repressor (179 aa).

It belongs to the ArgR family.

The protein localises to the cytoplasm. It functions in the pathway amino-acid biosynthesis; L-arginine biosynthesis [regulation]. Its function is as follows. Regulates arginine biosynthesis genes. The chain is Arginine repressor from Renibacterium salmoninarum (strain ATCC 33209 / DSM 20767 / JCM 11484 / NBRC 15589 / NCIMB 2235).